A 491-amino-acid chain; its full sequence is Ketol-acid reductoisomerase (NADP(+)) (491 aa).

Residues alanine 15 to serine 208 form the KARI N-terminal Rossmann domain. NADP(+) contacts are provided by residues cysteine 45 to glutamine 48, arginine 68, arginine 76, serine 78, and aspartate 108 to glutamine 110. The active site involves histidine 132. Glycine 158 is a binding site for NADP(+). 2 KARI C-terminal knotted domains span residues serine 209 to glutamine 344 and tyrosine 345 to methionine 484. 4 residues coordinate Mg(2+): aspartate 217, glutamate 221, glutamate 389, and glutamate 393. Substrate is bound at residue serine 414.

This sequence belongs to the ketol-acid reductoisomerase family. The cofactor is Mg(2+).

The enzyme catalyses (2R)-2,3-dihydroxy-3-methylbutanoate + NADP(+) = (2S)-2-acetolactate + NADPH + H(+). It carries out the reaction (2R,3R)-2,3-dihydroxy-3-methylpentanoate + NADP(+) = (S)-2-ethyl-2-hydroxy-3-oxobutanoate + NADPH + H(+). It functions in the pathway amino-acid biosynthesis; L-isoleucine biosynthesis; L-isoleucine from 2-oxobutanoate: step 2/4. Its pathway is amino-acid biosynthesis; L-valine biosynthesis; L-valine from pyruvate: step 2/4. Its function is as follows. Involved in the biosynthesis of branched-chain amino acids (BCAA). Catalyzes an alkyl-migration followed by a ketol-acid reduction of (S)-2-acetolactate (S2AL) to yield (R)-2,3-dihydroxy-isovalerate. In the isomerase reaction, S2AL is rearranged via a Mg-dependent methyl migration to produce 3-hydroxy-3-methyl-2-ketobutyrate (HMKB). In the reductase reaction, this 2-ketoacid undergoes a metal-dependent reduction by NADPH to yield (R)-2,3-dihydroxy-isovalerate. The polypeptide is Ketol-acid reductoisomerase (NADP(+)) (Escherichia coli (strain ATCC 8739 / DSM 1576 / NBRC 3972 / NCIMB 8545 / WDCM 00012 / Crooks)).